The following is a 429-amino-acid chain: Phosphomethylpyrimidine synthase (429 aa).

Substrate-binding positions include asparagine 66, methionine 95, tyrosine 124, histidine 163, 185–187, 226–229, and glutamate 265; these read SRG and DGLR. Residue histidine 269 coordinates Zn(2+). Position 292 (tyrosine 292) interacts with substrate. Residue histidine 333 participates in Zn(2+) binding. [4Fe-4S] cluster is bound by residues cysteine 407, cysteine 410, and cysteine 414.

It belongs to the ThiC family. The cofactor is [4Fe-4S] cluster.

The enzyme catalyses 5-amino-1-(5-phospho-beta-D-ribosyl)imidazole + S-adenosyl-L-methionine = 4-amino-2-methyl-5-(phosphooxymethyl)pyrimidine + CO + 5'-deoxyadenosine + formate + L-methionine + 3 H(+). It functions in the pathway cofactor biosynthesis; thiamine diphosphate biosynthesis. Catalyzes the synthesis of the hydroxymethylpyrimidine phosphate (HMP-P) moiety of thiamine from aminoimidazole ribotide (AIR) in a radical S-adenosyl-L-methionine (SAM)-dependent reaction. The protein is Phosphomethylpyrimidine synthase of Pyrococcus abyssi (strain GE5 / Orsay).